The sequence spans 242 residues: MSGGYTSLESSIRTCKVNTGNADRIESDRFLGFPDKKTCPPFLGTDLTGRAICPDSFMTKSAGCNTPEDRIYIENTVSRPHYYEYINLSPRGMLNDETIEGFGFGQQESAYIREGFGTNGTSAQYGSNGNGGNGSCGLNNYRAPVNLNGWPRAGYGIGPEDIDDLPGDLRFNATQPGPFNNMPLWAFSVVPREYGMPYSQLYGQNAEDQRLKQALWARAEIMGQDPIVPGPSRYGYRMMGDY.

The protein belongs to the IIV-6 415R family.

This is an uncharacterized protein from Invertebrate iridescent virus 6 (IIV-6).